Consider the following 475-residue polypeptide: NADH-quinone oxidoreductase subunit N 1 (475 aa).

The next 14 helical transmembrane spans lie at 8 to 28, 36 to 56, 67 to 87, 100 to 120, 122 to 142, 157 to 177, 199 to 219, 244 to 264, 268 to 288, 295 to 315, 322 to 342, 366 to 386, 403 to 423, and 443 to 463; these read VMPL…EAAT, LFAI…PSEP, GGFF…ITLI, GEYY…SAAA, LTIL…LAGI, FLLG…IYGA, FLSG…AVPF, AAAL…LETF, PTAI…AALI, MFAY…ATGT, VLYY…IIIL, AFLM…GGFI, LAVA…RVVI, and ATIA…SLLI.

Belongs to the complex I subunit 2 family. NDH-1 is composed of 14 different subunits. Subunits NuoA, H, J, K, L, M, N constitute the membrane sector of the complex.

The protein localises to the cell inner membrane. It carries out the reaction a quinone + NADH + 5 H(+)(in) = a quinol + NAD(+) + 4 H(+)(out). Functionally, NDH-1 shuttles electrons from NADH, via FMN and iron-sulfur (Fe-S) centers, to quinones in the respiratory chain. The immediate electron acceptor for the enzyme in this species is believed to be a menaquinone. Couples the redox reaction to proton translocation (for every two electrons transferred, four hydrogen ions are translocated across the cytoplasmic membrane), and thus conserves the redox energy in a proton gradient. This Chloroherpeton thalassium (strain ATCC 35110 / GB-78) protein is NADH-quinone oxidoreductase subunit N 1.